The following is a 478-amino-acid chain: Glycogen synthase (478 aa).

Lys-15 contributes to the ADP-alpha-D-glucose binding site.

The protein belongs to the glycosyltransferase 1 family. Bacterial/plant glycogen synthase subfamily.

It carries out the reaction [(1-&gt;4)-alpha-D-glucosyl](n) + ADP-alpha-D-glucose = [(1-&gt;4)-alpha-D-glucosyl](n+1) + ADP + H(+). Its pathway is glycan biosynthesis; glycogen biosynthesis. Synthesizes alpha-1,4-glucan chains using ADP-glucose. This is Glycogen synthase from Clostridium botulinum (strain Eklund 17B / Type B).